Here is a 527-residue protein sequence, read N- to C-terminus: Triostin synthetase I (527 aa).

Residue G187 to G188 participates in ATP binding. H230–Q231 contacts substrate. Residues S300–P302, D406, R421, and K512 contribute to the ATP site. K512 lines the substrate pocket.

This sequence belongs to the ATP-dependent AMP-binding enzyme family. As to quaternary structure, monomer.

Functionally, involved in triostin biosynthesis. Activates quinoxaline-2-carboxylic acid (QA) via catalysis of the ATP-pyrophosphate exchange reaction dependent on QA, and the formation of the corresponding adenylate. Also activates structural analogs of QA such as quinoline-2-carboxylic acid and thieno[3,2-b]pyridine-5-carboxylic acid, but not quinoline-3-carboxylic acid, quinoline-4-carboxylic acid, pyridine-2-carboxylic acid or 2-pyrazinecarboxylic acid. The sequence is that of Triostin synthetase I (trsA) from Streptomyces triostinicus.